The primary structure comprises 376 residues: WW domain-binding protein 4 (376 aa).

Residues 11-42 (KFCDYCKCWIADNRPSVEFHERGKNHKENVAR) form a Matrin-type zinc finger. A compositionally biased stretch (polar residues) spans 94 to 111 (PTVSPVISTVQPTPTSNQ). 2 disordered regions span residues 94-127 (PTVSPVISTVQPTPTSNQQKEKKKKKKKKEASKG) and 192-324 (WEKP…ECLS). A compositionally biased stretch (basic residues) spans 114-123 (EKKKKKKKKE). WW domains lie at 123–156 (EASKGGWVEGVTADGHCYYYDLITGASQWEKPEG) and 164–197 (TAAKAVWVEGLSEDGYTYYYNTETGESKWEKPED). The span at 219–272 (EDAKSSDSHSDSEGEQKKAGEASTETKKLIIKFKEKNKSTEKRIGPEIQKEKST) shows a compositional bias: basic and acidic residues. A phosphoserine mark is found at S228 and S230. The tract at residues 357-375 (KKRRLENGKSRNLRQRGDD) is interaction with SNRNP200.

In terms of assembly, component of the spliceosome B complex. Associated with U2 snRNPs. Binds splicing factors SNRPB, SNRPC and SF1. Interacts via the WW domains with the Pro-rich domains of KHDRBS1/SAM68. Interacts via the WW domains with the Pro-rich domains of WBP11. Interacts with SNRNP200.

It localises to the nucleus. It is found in the nucleus speckle. In terms of biological role, involved in pre-mRNA splicing as a component of the spliceosome. May play a role in cross-intron bridging of U1 and U2 snRNPs in the mammalian A complex. This is WW domain-binding protein 4 (Wbp4) from Mus musculus (Mouse).